The chain runs to 1021 residues: Sodium/potassium-transporting ATPase subunit alpha-1 (1021 aa).

A propeptide spanning residues 1-5 (MGKGV) is cleaved from the precursor. Residues 1 to 11 (MGKGVGRDKYE) are compositionally biased toward basic and acidic residues. Positions 1–36 (MGKGVGRDKYEPAAVSEHGDKKKAKKERDMDELKKE) are disordered. Over 4-85 (GVGRDKYEPA…NALTPPPTTP (82 aa)) the chain is Cytoplasmic. Position 9 is an N6-acetyllysine (lysine 9). Phosphotyrosine is present on tyrosine 10. Serine 16 carries the phosphoserine; by PKC modification. The residue at position 21 (lysine 21) is an N6-acetyllysine. The span at 26 to 36 (KERDMDELKKE) shows a compositional bias: basic and acidic residues. Phosphoserine is present on residues serine 38 and serine 45. The interval 80-82 (PPP) is phosphoinositide-3 kinase binding. The helical transmembrane segment at 86 to 106 (EWVKFCRQLFGGFSMLLWIGA) threads the bilayer. At 107 to 129 (ILCFLAYGIQAATEEEPQNDNLY) the chain is on the extracellular side. Residues 130–150 (LGVVLSAVVIITGCFSYYQEA) form a helical membrane-spanning segment. Residues 151 to 286 (KSSKIMESFK…GGQTPIAAEI (136 aa)) lie on the Cytoplasmic side of the membrane. The segment at 214–233 (SSLTGESEPQTRSPDFTNEN) is disordered. Residue serine 226 is modified to Phosphoserine. Tyrosine 258 carries the phosphotyrosine modification. Residues 287 to 306 (EHFIHIITGVAVFLGVSFFI) traverse the membrane as a helical segment. At 307–318 (LSLILEYTWLEA) the chain is on the extracellular side. The chain crosses the membrane as a helical span at residues 319 to 336 (VIFLIGIIVANVPEGLLA). The Cytoplasmic segment spans residues 337 to 770 (TVTVCLTLTA…EEGRLIFDNL (434 aa)). The active-site 4-aspartylphosphate intermediate is aspartate 374. A phosphoserine mark is found at serine 450 and serine 482. Lysine 485 is an ATP binding site. Tyrosine 540 carries the post-translational modification Phosphotyrosine. The mediates interaction with SCN7A stretch occupies residues 594-715 (RAAVPDAVGK…QGAIVAVTGD (122 aa)). Residue lysine 659 is modified to N6-succinyllysine. Residues serine 666 and serine 673 each carry the phosphoserine modification. Mg(2+) contacts are provided by aspartate 715 and aspartate 719. The chain crosses the membrane as a helical span at residues 771–790 (KKSIAYTLTSNIPEITPFLI). Topologically, residues 791-800 (FIIANIPLPL) are extracellular. Residues 801-821 (GTVTILCIDLGTDMVPAISLA) traverse the membrane as a helical segment. Residues 822 to 841 (YEQAESDIMKRQPRNPKTDK) lie on the Cytoplasmic side of the membrane. Residues 842–864 (LVNERLISMAYGQIGMIQALGGF) traverse the membrane as a helical segment. Topologically, residues 865 to 916 (FTYFVILAENGFLPTHLLGLRVDWDDRWINDVEDSYGQQWTYEQRKIVEFTC) are extracellular. Residues 917-936 (HTAFFVSIVVVQWADLVICK) form a helical membrane-spanning segment. Over 937 to 949 (TRRNSVFQQGMKN) the chain is Cytoplasmic. Position 941 is a phosphoserine; by PKA (serine 941). The helical transmembrane segment at 950-968 (KILIFGLFEETALAAFLSY) threads the bilayer. Residues 969 to 983 (CPGMGVALRMYPLKP) are Extracellular-facing. Residues 984 to 1004 (TWWFCAFPYSLLIFVYDEVRK) traverse the membrane as a helical segment. The Cytoplasmic portion of the chain corresponds to 1005-1021 (LIIRRRPGGWVEKETYY).

This sequence belongs to the cation transport ATPase (P-type) (TC 3.A.3) family. Type IIC subfamily. The sodium/potassium-transporting ATPase is composed of a catalytic alpha subunit, an auxiliary non-catalytic beta subunit and an additional regulatory subunit. Interacts with regulatory subunit FXYD1. Interacts with regulatory subunit FXYD3. Interacts with SIK1. Interacts with SLC35G1 and STIM1. Interacts with CLN3; this interaction regulates the sodium/potassium-transporting ATPase complex localization at the plasma membrane. Interacts with SCN7A; activates ATP1A1 P-type sodium:potassium-exchanging transporter activity which indirectly signals to nearby neurons to regulate sodium homeostasis. In terms of processing, phosphorylation on Tyr-10 modulates pumping activity. Phosphorylation of Ser-941 by PKA modulates the response of ATP1A1 to PKC. Dephosphorylation by protein phosphatase 2A (PP2A) following increases in intracellular sodium, leading to increase catalytic activity.

It is found in the cell membrane. It localises to the basolateral cell membrane. The protein localises to the sarcolemma. Its subcellular location is the cell projection. The protein resides in the axon. It is found in the melanosome. It carries out the reaction K(+)(out) + Na(+)(in) + ATP + H2O = K(+)(in) + Na(+)(out) + ADP + phosphate + H(+). Its function is as follows. This is the catalytic component of the active enzyme, which catalyzes the hydrolysis of ATP coupled with the exchange of sodium and potassium ions across the plasma membrane. This action creates the electrochemical gradient of sodium and potassium ions, providing the energy for active transport of various nutrients. Could also be part of an osmosensory signaling pathway that senses body-fluid sodium levels and controls salt intake behavior as well as voluntary water intake to regulate sodium homeostasis. This Canis lupus familiaris (Dog) protein is Sodium/potassium-transporting ATPase subunit alpha-1 (ATP1A1).